Reading from the N-terminus, the 90-residue chain is Cell division topological specificity factor (90 aa).

The interval 1 to 21 (MAGFWSKIFGNDEKPSSAQTA) is disordered. Residues 10–21 (GNDEKPSSAQTA) show a composition bias toward basic and acidic residues.

It belongs to the MinE family.

Functionally, prevents the cell division inhibition by proteins MinC and MinD at internal division sites while permitting inhibition at polar sites. This ensures cell division at the proper site by restricting the formation of a division septum at the midpoint of the long axis of the cell. The sequence is that of Cell division topological specificity factor from Acinetobacter baylyi (strain ATCC 33305 / BD413 / ADP1).